A 278-amino-acid polypeptide reads, in one-letter code: Large ribosomal subunit protein uL2 (278 aa).

The tract at residues 222 to 278 (GVVMNPVDHPHGGGEGRTSGGRHPVTPWGKPTKGAKTRKNKSTDKFIIRSRHERKKR) is disordered. The span at 269–278 (IRSRHERKKR) shows a compositional bias: basic residues.

It belongs to the universal ribosomal protein uL2 family. In terms of assembly, part of the 50S ribosomal subunit. Forms a bridge to the 30S subunit in the 70S ribosome.

In terms of biological role, one of the primary rRNA binding proteins. Required for association of the 30S and 50S subunits to form the 70S ribosome, for tRNA binding and peptide bond formation. It has been suggested to have peptidyltransferase activity; this is somewhat controversial. Makes several contacts with the 16S rRNA in the 70S ribosome. This Maricaulis maris (strain MCS10) (Caulobacter maris) protein is Large ribosomal subunit protein uL2.